Consider the following 313-residue polypeptide: Ribosomal RNA small subunit methyltransferase H (313 aa).

Residues 35-37, Asp55, Phe80, Asp102, and Gln109 contribute to the S-adenosyl-L-methionine site; that span reads GGH.

This sequence belongs to the methyltransferase superfamily. RsmH family.

It localises to the cytoplasm. The catalysed reaction is cytidine(1402) in 16S rRNA + S-adenosyl-L-methionine = N(4)-methylcytidine(1402) in 16S rRNA + S-adenosyl-L-homocysteine + H(+). Specifically methylates the N4 position of cytidine in position 1402 (C1402) of 16S rRNA. The sequence is that of Ribosomal RNA small subunit methyltransferase H from Shewanella oneidensis (strain ATCC 700550 / JCM 31522 / CIP 106686 / LMG 19005 / NCIMB 14063 / MR-1).